A 345-amino-acid chain; its full sequence is Dense granule protein 4 (345 aa).

The first 20 residues, 1–20, serve as a signal peptide directing secretion; it reads MQGTWFSLFVVVMVSHLACG. A compositionally biased stretch (polar residues) spans 227–251; that stretch reads SVSVSTEDSGLTGVKDSSSSESTVT. A disordered region spans residues 227 to 271; that stretch reads SVSVSTEDSGLTGVKDSSSSESTVTPADEAASESEEGDKTSRKSK. Residues 276–296 traverse the membrane as a helical segment; the sequence is ILTGLGVAATLAAAAAAAKAV. Positions 298 to 345 are disordered; the sequence is GFGGTRTSTAPAEAGKTELDDGYRPPPFNPRPSPYAELLKDLERMRKE. Pro residues predominate over residues 321-330; it reads RPPPFNPRPS. Positions 335–345 are enriched in basic and acidic residues; that stretch reads LLKDLERMRKE.

In terms of processing, O-glycosylated.

The protein resides in the secreted. The protein localises to the parasitophorous vacuole lumen. Its subcellular location is the parasitophorous vacuole membrane. It is found in the cytoplasmic vesicle. It localises to the secretory vesicle. Its function is as follows. Major granular component involved in excreted-secreted antigen (ESA) immunity. The chain is Dense granule protein 4 (GRA4) from Toxoplasma gondii.